The following is a 140-amino-acid chain: Nucleoside diphosphate kinase (140 aa).

ATP-binding residues include K11, F59, R87, T93, R104, and N114. Residue H117 is the Pros-phosphohistidine intermediate of the active site.

Belongs to the NDK family. As to quaternary structure, homotetramer. Mg(2+) is required as a cofactor.

It localises to the cytoplasm. It catalyses the reaction a 2'-deoxyribonucleoside 5'-diphosphate + ATP = a 2'-deoxyribonucleoside 5'-triphosphate + ADP. It carries out the reaction a ribonucleoside 5'-diphosphate + ATP = a ribonucleoside 5'-triphosphate + ADP. Major role in the synthesis of nucleoside triphosphates other than ATP. The ATP gamma phosphate is transferred to the NDP beta phosphate via a ping-pong mechanism, using a phosphorylated active-site intermediate. The protein is Nucleoside diphosphate kinase of Sphingopyxis alaskensis (strain DSM 13593 / LMG 18877 / RB2256) (Sphingomonas alaskensis).